A 104-amino-acid polypeptide reads, in one-letter code: V-type ATP synthase subunit F (104 aa).

The protein belongs to the V-ATPase F subunit family.

Functionally, produces ATP from ADP in the presence of a proton gradient across the membrane. The sequence is that of V-type ATP synthase subunit F (atpF) from Thermus thermophilus (strain ATCC 27634 / DSM 579 / HB8).